A 620-amino-acid chain; its full sequence is Glutathione-regulated potassium-efflux system protein KefC (620 aa).

At 1–3 the chain is on the periplasmic side; the sequence is MDS. Residues 4-24 form a helical membrane-spanning segment; the sequence is HTLVQALIYLGSAALIVPIAV. Position 25 (Arg-25) is a topological domain, cytoplasmic. Residues 26-46 form a helical membrane-spanning segment; the sequence is LGLGSVLGYLIAGCIIGPWGL. The Periplasmic portion of the chain corresponds to 47-53; that stretch reads RLVTDAE. A helical membrane pass occupies residues 54-74; sequence SILHFAEIGVVLMLFIIGLEL. Residues 75–89 are Cytoplasmic-facing; the sequence is DPQRLWKLRAAVFGG. A helical transmembrane segment spans residues 90–110; it reads GALQMVICGGLLGLFCMLLGL. At 111-113 the chain is on the periplasmic side; it reads RWQ. The helical transmembrane segment at 114 to 134 threads the bilayer; it reads VAELIGMTLALSSTAIAMQAM. Topologically, residues 135 to 148 are cytoplasmic; the sequence is NERNLMVTQMGRSA. A helical membrane pass occupies residues 149 to 169; the sequence is FAVLLFQDIAAIPLVAMIPLL. Residues 170–177 lie on the Periplasmic side of the membrane; sequence AASSASTT. The helical transmembrane segment at 178–198 threads the bilayer; the sequence is MGAFALSALKVAGALVLVVLL. Over 199-213 the chain is Cytoplasmic; sequence GRYVTRPALRFVARS. The helical transmembrane segment at 214–233 threads the bilayer; the sequence is GLREVFSAVALFLVFGFGLL. The Periplasmic portion of the chain corresponds to 234–236; that stretch reads LEE. Residues 237–254 form a helical membrane-spanning segment; sequence VGLSMAMGAFLAGVLLAS. The Cytoplasmic segment spans residues 255 to 269; that stretch reads SEYRHALESDIEPFK. The helical transmembrane segment at 270 to 290 threads the bilayer; sequence GLLLGLFFIGVGMSIDFGTLI. At 291 to 293 the chain is on the periplasmic side; it reads ENP. The helical transmembrane segment at 294 to 314 threads the bilayer; sequence LRIVILLLGFLIIKIAMLWLI. At 315 to 326 the chain is on the cytoplasmic side; the sequence is ARPLQVPNKQRR. A helical membrane pass occupies residues 327–347; sequence WFAVLLGQGSEFAFVVFGAAQ. Topologically, residues 348–358 are periplasmic; the sequence is MANVLEPEWAK. A helical transmembrane segment spans residues 359–379; the sequence is SLTLAVALSMAATPILLVILN. Residues 380–620 lie on the Cytoplasmic side of the membrane; it reads RLEQSSTEEA…ADEPETKPSS (241 aa). An RCK N-terminal domain is found at 399-518; it reads QPRVIIAGFG…AGVEKPERET (120 aa). The disordered stretch occupies residues 597-620; sequence GWQGTEEGKHTGNMADEPETKPSS.

The protein belongs to the monovalent cation:proton antiporter 2 (CPA2) transporter (TC 2.A.37) family. KefC subfamily. As to quaternary structure, homodimer. Interacts with the regulatory subunit KefF.

The protein localises to the cell inner membrane. Pore-forming subunit of a potassium efflux system that confers protection against electrophiles. Catalyzes K(+)/H(+) antiport. The sequence is that of Glutathione-regulated potassium-efflux system protein KefC from Shigella flexneri.